The following is a 193-amino-acid chain: Potassium-transporting ATPase KdpC subunit (193 aa).

Residues 14–34 form a helical membrane-spanning segment; sequence ITFTFLVLCGLVYPLIVTGIA.

It belongs to the KdpC family. As to quaternary structure, the system is composed of three essential subunits: KdpA, KdpB and KdpC.

Its subcellular location is the cell membrane. In terms of biological role, part of the high-affinity ATP-driven potassium transport (or Kdp) system, which catalyzes the hydrolysis of ATP coupled with the electrogenic transport of potassium into the cytoplasm. This subunit acts as a catalytic chaperone that increases the ATP-binding affinity of the ATP-hydrolyzing subunit KdpB by the formation of a transient KdpB/KdpC/ATP ternary complex. In Bacillus cereus (strain AH820), this protein is Potassium-transporting ATPase KdpC subunit.